Here is a 206-residue protein sequence, read N- to C-terminus: Somatotropin (206 aa).

Positions 1–22 (MAGLHFFPALLALLMASLQTHQ) are cleaved as a signal peptide. Intrachain disulfides connect Cys-75/Cys-179 and Cys-196/Cys-204.

The protein belongs to the somatotropin/prolactin family.

It is found in the secreted. Its function is as follows. Growth hormone plays an important role in growth control and is involved in the regulation of several anabolic processes. Implicated as an osmoregulatory substance important for seawater adaptation. The chain is Somatotropin (gh) from Protopterus annectens (African lungfish).